The sequence spans 419 residues: Serine hydroxymethyltransferase 1 (419 aa).

(6S)-5,6,7,8-tetrahydrofolate is bound by residues L121 and 125–127 (GHL). At K230 the chain carries N6-(pyridoxal phosphate)lysine. A (6S)-5,6,7,8-tetrahydrofolate-binding site is contributed by 356-358 (SPF).

It belongs to the SHMT family. As to quaternary structure, homodimer. Pyridoxal 5'-phosphate is required as a cofactor.

Its subcellular location is the cytoplasm. It carries out the reaction (6R)-5,10-methylene-5,6,7,8-tetrahydrofolate + glycine + H2O = (6S)-5,6,7,8-tetrahydrofolate + L-serine. Its pathway is one-carbon metabolism; tetrahydrofolate interconversion. It functions in the pathway amino-acid biosynthesis; glycine biosynthesis; glycine from L-serine: step 1/1. Its function is as follows. Catalyzes the reversible interconversion of serine and glycine with tetrahydrofolate (THF) serving as the one-carbon carrier. This reaction serves as the major source of one-carbon groups required for the biosynthesis of purines, thymidylate, methionine, and other important biomolecules. Also exhibits THF-independent aldolase activity toward beta-hydroxyamino acids, producing glycine and aldehydes, via a retro-aldol mechanism. This is Serine hydroxymethyltransferase 1 from Colwellia psychrerythraea (strain 34H / ATCC BAA-681) (Vibrio psychroerythus).